Here is a 339-residue protein sequence, read N- to C-terminus: Nicotinate-nucleotide--dimethylbenzimidazole phosphoribosyltransferase (339 aa).

The active-site Proton acceptor is the Glu306.

The protein belongs to the CobT family.

It carries out the reaction 5,6-dimethylbenzimidazole + nicotinate beta-D-ribonucleotide = alpha-ribazole 5'-phosphate + nicotinate + H(+). The protein operates within nucleoside biosynthesis; alpha-ribazole biosynthesis; alpha-ribazole from 5,6-dimethylbenzimidazole: step 1/2. Catalyzes the synthesis of alpha-ribazole-5'-phosphate from nicotinate mononucleotide (NAMN) and 5,6-dimethylbenzimidazole (DMB). The sequence is that of Nicotinate-nucleotide--dimethylbenzimidazole phosphoribosyltransferase from Brucella abortus (strain S19).